We begin with the raw amino-acid sequence, 549 residues long: Nucleoporin nup61 (549 aa).

Residues 1-32 (MSKRGADHQLTKDQDDSDDDRHGPVEVPKEAS) are compositionally biased toward basic and acidic residues. 3 disordered regions span residues 1-57 (MSKR…VSSP), 133-193 (IEKK…GFSA), and 207-438 (FTPK…NEDS). Ser17 is modified (phosphoserine). The segment covering 40–50 (KIAKPKSRKRP) has biased composition (basic residues). The segment covering 141–165 (QPTSNAVVSEVNPQQQKSQDSSSFV) has biased composition (polar residues). 2 stretches are compositionally biased toward basic and acidic residues: residues 170–180 (ASSEKEDKEKP) and 217–228 (SATEAEAKEKET). The segment covering 229 to 244 (SSNQTATGTAATTTNQ) has biased composition (low complexity). Composition is skewed to basic and acidic residues over residues 282-310 (ASKETKQTHETKDSKSEESKPSNNEKSEN) and 328-339 (KPIKFDTPEKKF). Ser347 carries the phosphoserine modification. Residues 407 to 421 (SEQEEKENGNDETRS) are compositionally biased toward basic and acidic residues. Residues 416-549 (NDETRSNDSL…NEKKVSKSEN (134 aa)) form the RanBD1 domain.

It is found in the nucleus. The protein localises to the nuclear pore complex. In terms of biological role, functions as a component of the nuclear pore complex (NPC). NPC components, collectively referred to as nucleoporins (NUPs), can play the role of both NPC structural components and of docking or interaction partners for transiently associated nuclear transport factors. Active directional transport is assured by both, a Phe-Gly (FG) repeat affinity gradient for these transport factors across the NPC and a transport cofactor concentration gradient across the nuclear envelope. May play a role in mitotic spindle formation and/or function. This is Nucleoporin nup61 (nup61) from Schizosaccharomyces pombe (strain 972 / ATCC 24843) (Fission yeast).